Reading from the N-terminus, the 221-residue chain is Cytidylate kinase (221 aa).

7 to 15 (GPSASGKSS) is an ATP binding site.

The protein belongs to the cytidylate kinase family. Type 1 subfamily.

Its subcellular location is the cytoplasm. The catalysed reaction is CMP + ATP = CDP + ADP. The enzyme catalyses dCMP + ATP = dCDP + ADP. This Borreliella burgdorferi (strain ZS7) (Borrelia burgdorferi) protein is Cytidylate kinase.